Consider the following 343-residue polypeptide: Ornithine carbamoyltransferase (343 aa).

Carbamoyl phosphate-binding positions include 62–65, Gln-89, Arg-113, and 140–143; these read STRT and HPTQ. L-ornithine is bound by residues Asn-172, Asp-236, and 240–241; that span reads SM. Carbamoyl phosphate contacts are provided by residues 278 to 279 and Arg-323; that span reads CL.

The protein belongs to the aspartate/ornithine carbamoyltransferase superfamily. OTCase family.

It localises to the cytoplasm. The enzyme catalyses carbamoyl phosphate + L-ornithine = L-citrulline + phosphate + H(+). It functions in the pathway amino-acid degradation; L-arginine degradation via ADI pathway; carbamoyl phosphate from L-arginine: step 2/2. In terms of biological role, reversibly catalyzes the transfer of the carbamoyl group from carbamoyl phosphate (CP) to the N(epsilon) atom of ornithine (ORN) to produce L-citrulline. This is Ornithine carbamoyltransferase from Levilactobacillus brevis (strain ATCC 367 / BCRC 12310 / CIP 105137 / JCM 1170 / LMG 11437 / NCIMB 947 / NCTC 947) (Lactobacillus brevis).